The chain runs to 131 residues: Profilin-4 (131 aa).

Cys-13 and Cys-115 are disulfide-bonded. The Involved in PIP2 interaction signature appears at 81–97 (AVIRGKKGAGGITVKKT). Thr-111 bears the Phosphothreonine mark.

The protein belongs to the profilin family. Occurs in many kinds of cells as a complex with monomeric actin in a 1:1 ratio. Post-translationally, phosphorylated by MAP kinases.

It localises to the cytoplasm. Its subcellular location is the cytoskeleton. Its function is as follows. Binds to actin and affects the structure of the cytoskeleton. At high concentrations, profilin prevents the polymerization of actin, whereas it enhances it at low concentrations. This Olea europaea (Common olive) protein is Profilin-4.